The sequence spans 450 residues: Phosphoglucosamine mutase (450 aa).

The active-site Phosphoserine intermediate is the Ser-101. The Mg(2+) site is built by Ser-101, Asp-241, Asp-243, and Asp-245. Phosphoserine is present on Ser-101.

Belongs to the phosphohexose mutase family. Requires Mg(2+) as cofactor. Post-translationally, activated by phosphorylation.

It catalyses the reaction alpha-D-glucosamine 1-phosphate = D-glucosamine 6-phosphate. Its function is as follows. Catalyzes the conversion of glucosamine-6-phosphate to glucosamine-1-phosphate. The sequence is that of Phosphoglucosamine mutase from Listeria welshimeri serovar 6b (strain ATCC 35897 / DSM 20650 / CCUG 15529 / CIP 8149 / NCTC 11857 / SLCC 5334 / V8).